Reading from the N-terminus, the 235-residue chain is tRNA (guanine-N(1)-)-methyltransferase (235 aa).

S-adenosyl-L-methionine-binding positions include glycine 114 and 134-139 (VGDYIL).

It belongs to the RNA methyltransferase TrmD family. As to quaternary structure, homodimer.

It is found in the cytoplasm. It carries out the reaction guanosine(37) in tRNA + S-adenosyl-L-methionine = N(1)-methylguanosine(37) in tRNA + S-adenosyl-L-homocysteine + H(+). Specifically methylates guanosine-37 in various tRNAs. The chain is tRNA (guanine-N(1)-)-methyltransferase from Chelativorans sp. (strain BNC1).